We begin with the raw amino-acid sequence, 131 residues long: Spermatocyte protein spe-27 (131 aa).

Residues 1–17 (MNKSLIFLLSFAYSCYS) form the signal peptide.

Functionally, required for spermiogenesis. This is Spermatocyte protein spe-27 (spe-27) from Caenorhabditis elegans.